Here is a 315-residue protein sequence, read N- to C-terminus: MTCFSSATPHRHHLLLSSPSTSKSLLRFPSSYLKPSPSLLFHGSSRSLLSCSDGSNNRPPPSGDTVPNNFCIIEGSETVQDFVQMQLQEIQDNIRSRRNKIFLLMEEVRRLRVQQRIKSVKAINEDSELEATEMPEITSSIPFLPNVTPKTLKQLYSTSVALISGIIFFGGLIAPNLELKVGLGGTSYEDFIRSLHLPLQLSQVDPIVASFSGGAVGVISTLMLIEVNNVKQQEKKRCKYCLGTGYLPCARCSASGVCLSIDPITRPRATNQLMQVATTKRCLNCSGAGKVMCPTCLCTGMVTASEHDPRFDPFD.

A chloroplast-targeting transit peptide spans 1–16 (MTCFSSATPHRHHLLL). 2 helical membrane passes run 155–175 (LYST…LIAP) and 207–227 (IVAS…LIEV). The segment at 225 to 307 (IEVNNVKQQE…CTGMVTASEH (83 aa)) adopts a CR-type zinc-finger fold. The CXXCXGXG motif repeat unit spans residues 238–245 (CKYCLGTG). One copy of the CXXCXXXG motif repeat lies at 249–256 (CARCSASG). The stretch at 282 to 289 (CLNCSGAG) is one CXXCXGXG motif repeat. The CXXCXXXG motif repeat unit spans residues 293–300 (CPTCLCTG).

This sequence belongs to the orange-like family. As to quaternary structure, interacts with PSY1.

The protein resides in the plastid. Its subcellular location is the chloroplast membrane. May be associated with accumulation of carotenoids in chromoplasts. The polypeptide is Protein ORANGE-LIKE, chloroplastic (ORLIKE) (Arabidopsis thaliana (Mouse-ear cress)).